A 184-amino-acid polypeptide reads, in one-letter code: Ethylene-responsive transcription factor ERF122 (184 aa).

Positions 120–177 form a DNA-binding region, AP2/ERF; that stretch reads KYKGVRKKPSGKWAAEIWDPRSKSRRWLGTFLTAEMAAQSYNDAAAEYRARRGKTNGE.

Belongs to the AP2/ERF transcription factor family. ERF subfamily.

It is found in the nucleus. Its function is as follows. Probably acts as a transcriptional activator. Binds to the GCC-box pathogenesis-related promoter element. May be involved in the regulation of gene expression by stress factors and by components of stress signal transduction pathways. This Arabidopsis thaliana (Mouse-ear cress) protein is Ethylene-responsive transcription factor ERF122 (ERF122).